Consider the following 427-residue polypeptide: Trigger factor (427 aa).

Positions 163–248 constitute a PPIase FKBP-type domain; that stretch reads GDTVVIDFVG…VNEVKAKEVP (86 aa).

This sequence belongs to the FKBP-type PPIase family. Tig subfamily.

Its subcellular location is the cytoplasm. The catalysed reaction is [protein]-peptidylproline (omega=180) = [protein]-peptidylproline (omega=0). Functionally, involved in protein export. Acts as a chaperone by maintaining the newly synthesized protein in an open conformation. Functions as a peptidyl-prolyl cis-trans isomerase. The protein is Trigger factor of Streptococcus thermophilus (strain CNRZ 1066).